Here is a 201-residue protein sequence, read N- to C-terminus: Alpha-1-acid glycoprotein (201 aa).

Positions 1–18 (MALPWALAVLSLLPLLHA) are cleaved as a signal peptide. Asn25, Asn33, Asn87, Asn93, Asn103, and Asn169 each carry an N-linked (GlcNAc...) asparagine glycan. A disulfide bridge connects residues Cys90 and Cys183.

The protein belongs to the calycin superfamily. Lipocalin family.

Its subcellular location is the secreted. Functionally, functions as a transport protein in the blood stream. Binds various ligands in the interior of its beta-barrel domain. Appears to function in modulating the activity of the immune system during the acute-phase reaction. This is Alpha-1-acid glycoprotein (ORM1) from Oryctolagus cuniculus (Rabbit).